The sequence spans 112 residues: Small ribosomal subunit protein bS16 (112 aa).

The protein belongs to the bacterial ribosomal protein bS16 family.

In Karelsulcia muelleri (strain GWSS) (Sulcia muelleri), this protein is Small ribosomal subunit protein bS16.